We begin with the raw amino-acid sequence, 345 residues long: Nuclear distribution protein nudE-like 1 (345 aa).

A coiled-coil region spans residues 27-190 (KQTFQEARDE…LAVRERQQEV (164 aa)). Positions 56–166 (VQAEQRNRDL…LDEKESLLVS (111 aa)) are self-association. An interaction with KATNB1 region spans residues 64–189 (DLQADNQRLK…ELAVRERQQE (126 aa)). The interval 114–133 (YVRELEQANDDLERAKRATI) is required for interaction with PAFAH1B1. An interaction with CENPF region spans residues 175–345 (RDLRQELAVR…SAPGMLPLSV (171 aa)). An interaction with YWHAE region spans residues 189–256 (EVTRKSAPSS…SARISALNIV (68 aa)). The interval 191 to 345 (TRKSAPSSPT…SAPGMLPLSV (155 aa)) is interaction with NEFL. Residues 195 to 256 (APSSPTLDCE…SARISALNIV (62 aa)) are interaction with KATNA1. Ser215 bears the Phosphoserine mark. The segment at 217-240 (PATPVGKGTENSFPSPKAIPNGFG) is disordered. Thr219 bears the Phosphothreonine; by CDK1 and MAPK1 mark. Residues 227–278 (NSFPSPKAIPNGFGTSPLTPSARISALNIVGDLLRKVGALESKLAACRNFAK) form an interaction with DISC1 region. Ser231 is modified (phosphoserine). The residue at position 242 (Ser242) is a Phosphoserine; by CDK1. Residue Thr245 is modified to Phosphothreonine; by CDK1 and MAPK1. Residues 256-291 (VGDLLRKVGALESKLAACRNFAKDQASRKSYISGNV) form a required for localization to the centrosome and interaction with dynein, dynactin, tubulin gamma, PCM1 and PCNT region. A lipid anchor (S-palmitoyl cysteine; by ZDHHC2, ZDHHC3 and ZDHHC7) is attached at Cys273. The interval 316–345 (AVNGFDPAPPPPGLGSSRPLSAPGMLPLSV) is disordered. A compositionally biased stretch (low complexity) spans 329–339 (LGSSRPLSAPG). Ser344 carries the phosphoserine modification.

This sequence belongs to the nudE family. Self-associates. Interacts with DISC1, dynein, dynactin, tubulin gamma, KATNA1, KATNB1, microtubules, PAFAH1B1, PCM1, PCNT, and YWHAE. Interacts directly with NEFL and indirectly with NEFH. Interacts (via C-terminus) with CENPF. Interacts with ZNF365. Interacts with PLEKHM1 (via N- and C-terminus). Interacts with GTP-bound RAB9A; the interaction may lead to RAB9A-dynein motor tethering. In terms of processing, phosphorylated in mitosis. Can be phosphorylated by CDK1, CDK5 and MAPK1. Phosphorylation by CDK5 promotes interaction with KATNA1 and YWHAE. Palmitoylation at Cys-273 reduces affinity for dynein. In terms of tissue distribution, expressed at low levels in heart, hypothalamus, liver, lung, spleen and stomach. Expressed at higher levels in testis and brain. Within the brain, expressed in cerebellum, cerebral stem, cortex and striatum.

It is found in the cytoplasm. It localises to the cytoskeleton. Its subcellular location is the microtubule organizing center. The protein resides in the centrosome. The protein localises to the chromosome. It is found in the centromere. It localises to the kinetochore. Its subcellular location is the spindle. Its function is as follows. Required for organization of the cellular microtubule array and microtubule anchoring at the centrosome. May regulate microtubule organization at least in part by targeting the microtubule severing protein KATNA1 to the centrosome. Also positively regulates the activity of the minus-end directed microtubule motor protein dynein. May enhance dynein-mediated microtubule sliding by targeting dynein to the microtubule plus ends. Required for several dynein- and microtubule-dependent processes such as the maintenance of Golgi integrity, the centripetal motion of secretory vesicles and the coupling of the nucleus and centrosome. Also required during brain development for the migration of newly formed neurons from the ventricular/subventricular zone toward the cortical plate. Plays a role, together with DISC1, in the regulation of neurite outgrowth. Required for mitosis in some cell types but appears to be dispensible for mitosis in cortical neuronal progenitors, which instead requires NDE1. Facilitates the polymerization of neurofilaments from the individual subunits NEFH and NEFL. Positively regulates lysosome peripheral distribution and ruffled border formation in osteoclasts. Plays a role, together with DISC1, in the regulation of neurite outgrowth. May act as a RAB9A/B effector that tethers RAB9-associated late endosomes to the dynein motor for their retrograde transport to the trans-Golgi network. This chain is Nuclear distribution protein nudE-like 1 (NDEL1), found in Oryctolagus cuniculus (Rabbit).